The sequence spans 143 residues: Fluoride-specific ion channel FluC 1 (143 aa).

The next 4 membrane-spanning stretches (helical) occupy residues 13-33 (VLVG…SVIA), 42-62 (GVPW…ATLL), 80-100 (LCIG…TVEA), and 111-131 (WGIA…WVVI). The Na(+) site is built by Gly-88 and Thr-91.

This sequence belongs to the fluoride channel Fluc/FEX (TC 1.A.43) family.

It localises to the cell membrane. It catalyses the reaction fluoride(in) = fluoride(out). With respect to regulation, na(+) is not transported, but it plays an essential structural role and its presence is essential for fluoride channel function. Functionally, fluoride-specific ion channel. Important for reducing fluoride concentration in the cell, thus reducing its toxicity. The protein is Fluoride-specific ion channel FluC 1 of Cutibacterium acnes (strain DSM 16379 / KPA171202) (Propionibacterium acnes).